The primary structure comprises 380 residues: Homoserine O-acetyltransferase (380 aa).

The AB hydrolase-1 domain maps to 70-366 (NAVLVFHALT…SPHGHDAFLI (297 aa)). Ser186 acts as the Nucleophile in catalysis. Residue Arg250 coordinates substrate. Residues Asp333 and His361 contribute to the active site. Asp362 lines the substrate pocket.

This sequence belongs to the AB hydrolase superfamily. MetX family. As to quaternary structure, homodimer.

The protein resides in the cytoplasm. It catalyses the reaction L-homoserine + acetyl-CoA = O-acetyl-L-homoserine + CoA. It functions in the pathway amino-acid biosynthesis; L-methionine biosynthesis via de novo pathway; O-acetyl-L-homoserine from L-homoserine: step 1/1. In terms of biological role, transfers an acetyl group from acetyl-CoA to L-homoserine, forming acetyl-L-homoserine. This chain is Homoserine O-acetyltransferase, found in Thermus thermophilus (strain ATCC BAA-163 / DSM 7039 / HB27).